Consider the following 386-residue polypeptide: Succinate--CoA ligase [ADP-forming] subunit beta (386 aa).

In terms of domain architecture, ATP-grasp spans 9 to 244 (KALFREHGIP…ETQEDAREAR (236 aa)). Residues K46, 53 to 55 (GRG), E99, T102, and E107 contribute to the ATP site. Residues N199 and D213 each contribute to the Mg(2+) site. Residues N264 and 321 to 323 (GIV) contribute to the substrate site.

It belongs to the succinate/malate CoA ligase beta subunit family. As to quaternary structure, heterotetramer of two alpha and two beta subunits. Requires Mg(2+) as cofactor.

The catalysed reaction is succinate + ATP + CoA = succinyl-CoA + ADP + phosphate. It catalyses the reaction GTP + succinate + CoA = succinyl-CoA + GDP + phosphate. The protein operates within carbohydrate metabolism; tricarboxylic acid cycle; succinate from succinyl-CoA (ligase route): step 1/1. In terms of biological role, succinyl-CoA synthetase functions in the citric acid cycle (TCA), coupling the hydrolysis of succinyl-CoA to the synthesis of either ATP or GTP and thus represents the only step of substrate-level phosphorylation in the TCA. The beta subunit provides nucleotide specificity of the enzyme and binds the substrate succinate, while the binding sites for coenzyme A and phosphate are found in the alpha subunit. The protein is Succinate--CoA ligase [ADP-forming] subunit beta of Thioalkalivibrio sulfidiphilus (strain HL-EbGR7).